The following is an 83-amino-acid chain: Small ribosomal subunit protein bS16 (83 aa).

The protein belongs to the bacterial ribosomal protein bS16 family.

In Pseudoalteromonas atlantica (strain T6c / ATCC BAA-1087), this protein is Small ribosomal subunit protein bS16.